The following is a 191-amino-acid chain: Fe/S biogenesis protein NfuA (191 aa).

Residues cysteine 149 and cysteine 152 each contribute to the [4Fe-4S] cluster site.

The protein belongs to the NfuA family. Homodimer. Requires [4Fe-4S] cluster as cofactor.

In terms of biological role, involved in iron-sulfur cluster biogenesis. Binds a 4Fe-4S cluster, can transfer this cluster to apoproteins, and thereby intervenes in the maturation of Fe/S proteins. Could also act as a scaffold/chaperone for damaged Fe/S proteins. The polypeptide is Fe/S biogenesis protein NfuA (Cronobacter sakazakii (strain ATCC BAA-894) (Enterobacter sakazakii)).